We begin with the raw amino-acid sequence, 96 residues long: Protein Vpr (96 aa).

A homooligomerization region spans residues 1–42 (MEQAPEDQGPQREPYNEWTLELLEELKSEAVRHFPRIWLHNL). Ser79, Ser94, and Ser96 each carry phosphoserine; by host.

The protein belongs to the HIV-1 VPR protein family. As to quaternary structure, homooligomer, may form homodimer. Interacts with p6-gag region of the Pr55 Gag precursor protein through a (Leu-X-X)4 motif near the C-terminus of the P6gag protein. Interacts with host UNG. May interact with host RAD23A/HHR23A. Interacts with host VPRBP/DCAF1, leading to hijack the CUL4A-RBX1-DDB1-DCAF1/VPRBP complex, mediating ubiquitination of host proteins such as TERT and ZGPAT and arrest of the cell cycle in G2 phase. Phosphorylated on several residues by host. These phosphorylations regulate VPR activity for the nuclear import of the HIV-1 pre-integration complex.

The protein localises to the virion. The protein resides in the host nucleus. It localises to the host extracellular space. Functionally, during virus replication, may deplete host UNG protein, and incude G2-M cell cycle arrest. Acts by targeting specific host proteins for degradation by the 26S proteasome, through association with the cellular CUL4A-DDB1 E3 ligase complex by direct interaction with host VPRPB/DCAF-1. Cell cycle arrest reportedly occurs within hours of infection and is not blocked by antiviral agents, suggesting that it is initiated by the VPR carried into the virion. Additionally, VPR induces apoptosis in a cell cycle dependent manner suggesting that these two effects are mechanistically linked. Detected in the serum and cerebrospinal fluid of AIDS patient, VPR may also induce cell death to bystander cells. In terms of biological role, during virus entry, plays a role in the transport of the viral pre-integration (PIC) complex to the host nucleus. This function is crucial for viral infection of non-dividing macrophages. May act directly at the nuclear pore complex, by binding nucleoporins phenylalanine-glycine (FG)-repeat regions. The sequence is that of Protein Vpr from Homo sapiens (Human).